The primary structure comprises 62 residues: Translational regulator CsrA 3 (62 aa).

This sequence belongs to the CsrA/RsmA family. In terms of assembly, homodimer; the beta-strands of each monomer intercalate to form a hydrophobic core, while the alpha-helices form wings that extend away from the core.

Its subcellular location is the cytoplasm. A key translational regulator that binds mRNA to regulate translation initiation and/or mRNA stability. Mediates global changes in gene expression, shifting from rapid growth to stress survival by linking envelope stress, the stringent response and the catabolite repression systems. Usually binds in the 5'-UTR; binding at or near the Shine-Dalgarno sequence prevents ribosome-binding, repressing translation, binding elsewhere in the 5'-UTR can activate translation and/or stabilize the mRNA. Its function is antagonized by small RNA(s). The polypeptide is Translational regulator CsrA 3 (Pseudomonas syringae pv. tomato (strain ATCC BAA-871 / DC3000)).